Here is a 207-residue protein sequence, read N- to C-terminus: Protein MK0488 (207 aa).

The AMMECR1 domain occupies 8–200; sequence EEGEFLVRLA…EEEPEGPVRE (193 aa).

This Methanopyrus kandleri (strain AV19 / DSM 6324 / JCM 9639 / NBRC 100938) protein is Protein MK0488.